The primary structure comprises 239 residues: Phosphoribosylaminoimidazole-succinocarboxamide synthase (239 aa).

This sequence belongs to the SAICAR synthetase family.

The catalysed reaction is 5-amino-1-(5-phospho-D-ribosyl)imidazole-4-carboxylate + L-aspartate + ATP = (2S)-2-[5-amino-1-(5-phospho-beta-D-ribosyl)imidazole-4-carboxamido]succinate + ADP + phosphate + 2 H(+). Its pathway is purine metabolism; IMP biosynthesis via de novo pathway; 5-amino-1-(5-phospho-D-ribosyl)imidazole-4-carboxamide from 5-amino-1-(5-phospho-D-ribosyl)imidazole-4-carboxylate: step 1/2. The chain is Phosphoribosylaminoimidazole-succinocarboxamide synthase from Bacillus cereus (strain G9842).